The chain runs to 331 residues: Flagellar P-ring protein (331 aa).

The N-terminal stretch at 1 to 25 (MKKRLAVLLVIVLTITFSFSVTTRI) is a signal peptide.

This sequence belongs to the FlgI family. As to quaternary structure, the basal body constitutes a major portion of the flagellar organelle and consists of four rings (L,P,S, and M) mounted on a central rod.

It is found in the periplasm. It localises to the bacterial flagellum basal body. In terms of biological role, assembles around the rod to form the L-ring and probably protects the motor/basal body from shearing forces during rotation. The protein is Flagellar P-ring protein of Thermotoga petrophila (strain ATCC BAA-488 / DSM 13995 / JCM 10881 / RKU-1).